A 75-amino-acid chain; its full sequence is Protein SlyX homolog (75 aa).

It belongs to the SlyX family.

In Vibrio atlanticus (strain LGP32) (Vibrio splendidus (strain Mel32)), this protein is Protein SlyX homolog.